Reading from the N-terminus, the 155-residue chain is Small ribosomal subunit protein uS7cz/uS7cy (155 aa).

It belongs to the universal ribosomal protein uS7 family. As to quaternary structure, part of the 30S ribosomal subunit.

It is found in the plastid. The protein resides in the chloroplast. In terms of biological role, one of the primary rRNA binding proteins, it binds directly to 16S rRNA where it nucleates assembly of the head domain of the 30S subunit. The chain is Small ribosomal subunit protein uS7cz/uS7cy (rps7-A) from Coffea arabica (Arabian coffee).